We begin with the raw amino-acid sequence, 199 residues long: Large ribosomal subunit protein uL5 (199 aa).

This sequence belongs to the universal ribosomal protein uL5 family. Part of the 50S ribosomal subunit; part of the 5S rRNA/L5/L18/L25 subcomplex. Contacts the 5S rRNA and the P site tRNA. Forms a bridge to the 30S subunit in the 70S ribosome.

This is one of the proteins that bind and probably mediate the attachment of the 5S RNA into the large ribosomal subunit, where it forms part of the central protuberance. In the 70S ribosome it contacts protein S13 of the 30S subunit (bridge B1b), connecting the 2 subunits; this bridge is implicated in subunit movement. Contacts the P site tRNA; the 5S rRNA and some of its associated proteins might help stabilize positioning of ribosome-bound tRNAs. This is Large ribosomal subunit protein uL5 from Frankia casuarinae (strain DSM 45818 / CECT 9043 / HFP020203 / CcI3).